A 337-amino-acid chain; its full sequence is MGKTSRDKRDIYYRLAKENKWRARSAFKLMQIDDEFQILKGVRRAVDLCAAPGSWSQVLSKRLYEEDQEAKIVAIDLQPMAPIPGVIQLQGDITSVDTANQVIKHFSGEKSDIVICDGAPDVTGIHSLDEFMQAELILAAFNITSHVLKEGGNFLAKIFRSRNSSLLYAQMKKYFKKVYLAKPRSSRQSSCEAFVLCLDYSPPEGFVPTMGKTSLDATDASAISPDIIDGFVTCGDLSGWDSEKSYPLDIDACFPKGEIDEEQKKRYEFKDVVQPPTDPAYKAALDKKKSGVFAKMSADLNRQLKAELSRGKDQKKTPAENVPSVEELEKAAEKFQL.

Glycine 53, tryptophan 55, aspartate 76, aspartate 92, and aspartate 117 together coordinate S-adenosyl-L-methionine. Lysine 157 serves as the catalytic Proton acceptor. 2 stretches are compositionally biased toward basic and acidic residues: residues leucine 304–proline 318 and glutamate 327–leucine 337. The disordered stretch occupies residues leucine 304–leucine 337.

The protein belongs to the class I-like SAM-binding methyltransferase superfamily. RNA methyltransferase RlmE family. TRM7 subfamily.

It localises to the cytoplasm. The enzyme catalyses cytidine(32)/guanosine(34) in tRNA + 2 S-adenosyl-L-methionine = 2'-O-methylcytidine(32)/2'-O-methylguanosine(34) in tRNA + 2 S-adenosyl-L-homocysteine + 2 H(+). Its function is as follows. Methylates the 2'-O-ribose of nucleotides at positions 32 and 34 of the tRNA anticodon loop of substrate tRNAs. The polypeptide is Putative tRNA (cytidine(32)/guanosine(34)-2'-O)-methyltransferase (Caenorhabditis elegans).